Here is a 270-residue protein sequence, read N- to C-terminus: Formamidopyrimidine-DNA glycosylase (270 aa).

Catalysis depends on proline 2, which acts as the Schiff-base intermediate with DNA. The active-site Proton donor is glutamate 3. The active-site Proton donor; for beta-elimination activity is lysine 58. Histidine 91, arginine 110, and lysine 151 together coordinate DNA. Residues 236-270 (LVYGKAGAPCTECNTPLKEIRMNNRSTVYCPRCQR) form an FPG-type zinc finger. Arginine 260 acts as the Proton donor; for delta-elimination activity in catalysis.

It belongs to the FPG family. As to quaternary structure, monomer. The cofactor is Zn(2+).

It catalyses the reaction Hydrolysis of DNA containing ring-opened 7-methylguanine residues, releasing 2,6-diamino-4-hydroxy-5-(N-methyl)formamidopyrimidine.. The catalysed reaction is 2'-deoxyribonucleotide-(2'-deoxyribose 5'-phosphate)-2'-deoxyribonucleotide-DNA = a 3'-end 2'-deoxyribonucleotide-(2,3-dehydro-2,3-deoxyribose 5'-phosphate)-DNA + a 5'-end 5'-phospho-2'-deoxyribonucleoside-DNA + H(+). Functionally, involved in base excision repair of DNA damaged by oxidation or by mutagenic agents. Acts as a DNA glycosylase that recognizes and removes damaged bases. Has a preference for oxidized purines, such as 7,8-dihydro-8-oxoguanine (8-oxoG). Has AP (apurinic/apyrimidinic) lyase activity and introduces nicks in the DNA strand. Cleaves the DNA backbone by beta-delta elimination to generate a single-strand break at the site of the removed base with both 3'- and 5'-phosphates. This Marinobacter nauticus (strain ATCC 700491 / DSM 11845 / VT8) (Marinobacter aquaeolei) protein is Formamidopyrimidine-DNA glycosylase.